Here is a 26-residue protein sequence, read N- to C-terminus: Unknown protein 16 (26 aa).

The disordered stretch occupies residues 1–26; the sequence is AINSESGVRSVVPQPCNALPNQGPEK.

This Pseudotsuga menziesii (Douglas-fir) protein is Unknown protein 16.